The chain runs to 245 residues: Ribonuclease 3 (245 aa).

Residues 19–148 (FKVFQEKIGI…FIGALYLDQG (130 aa)) form the RNase III domain. E61 serves as a coordination point for Mg(2+). D65 is a catalytic residue. Mg(2+) is bound by residues D134 and E137. E137 is a catalytic residue. The region spanning 174–243 (DYKSQLQELI…AAEALKKLKE (70 aa)) is the DRBM domain.

This sequence belongs to the ribonuclease III family. As to quaternary structure, homodimer. It depends on Mg(2+) as a cofactor.

It localises to the cytoplasm. The enzyme catalyses Endonucleolytic cleavage to 5'-phosphomonoester.. Functionally, digests double-stranded RNA. Involved in the processing of primary rRNA transcript to yield the immediate precursors to the large and small rRNAs (23S and 16S). Processes some mRNAs, and tRNAs when they are encoded in the rRNA operon. Processes pre-crRNA and tracrRNA of type II CRISPR loci if present in the organism. The polypeptide is Ribonuclease 3 (Bacillus cereus (strain AH187)).